We begin with the raw amino-acid sequence, 265 residues long: uncharacterized protein (265 aa).

This is an uncharacterized protein from Mycoplasma capricolum subsp. capricolum (strain California kid / ATCC 27343 / NCTC 10154).